Reading from the N-terminus, the 304-residue chain is Ribosomal protein L11 methyltransferase (304 aa).

Residues threonine 147, glycine 168, aspartate 190, and asparagine 238 each coordinate S-adenosyl-L-methionine.

This sequence belongs to the methyltransferase superfamily. PrmA family.

Its subcellular location is the cytoplasm. The catalysed reaction is L-lysyl-[protein] + 3 S-adenosyl-L-methionine = N(6),N(6),N(6)-trimethyl-L-lysyl-[protein] + 3 S-adenosyl-L-homocysteine + 3 H(+). Its function is as follows. Methylates ribosomal protein L11. This is Ribosomal protein L11 methyltransferase from Prochlorococcus marinus (strain SARG / CCMP1375 / SS120).